We begin with the raw amino-acid sequence, 229 residues long: Large ribosomal subunit protein uL1 (229 aa).

This sequence belongs to the universal ribosomal protein uL1 family. As to quaternary structure, part of the 50S ribosomal subunit.

Functionally, binds directly to 23S rRNA. The L1 stalk is quite mobile in the ribosome, and is involved in E site tRNA release. Its function is as follows. Protein L1 is also a translational repressor protein, it controls the translation of the L11 operon by binding to its mRNA. The sequence is that of Large ribosomal subunit protein uL1 from Streptococcus thermophilus (strain CNRZ 1066).